A 126-amino-acid polypeptide reads, in one-letter code: uncharacterized protein (126 aa).

This is an uncharacterized protein from Xylella fastidiosa (strain 9a5c).